We begin with the raw amino-acid sequence, 184 residues long: ATP synthase subunit delta (184 aa).

This sequence belongs to the ATPase delta chain family. As to quaternary structure, F-type ATPases have 2 components, F(1) - the catalytic core - and F(0) - the membrane proton channel. F(1) has five subunits: alpha(3), beta(3), gamma(1), delta(1), epsilon(1). F(0) has three main subunits: a(1), b(2) and c(10-14). The alpha and beta chains form an alternating ring which encloses part of the gamma chain. F(1) is attached to F(0) by a central stalk formed by the gamma and epsilon chains, while a peripheral stalk is formed by the delta and b chains.

It localises to the cell inner membrane. Functionally, f(1)F(0) ATP synthase produces ATP from ADP in the presence of a proton or sodium gradient. F-type ATPases consist of two structural domains, F(1) containing the extramembraneous catalytic core and F(0) containing the membrane proton channel, linked together by a central stalk and a peripheral stalk. During catalysis, ATP synthesis in the catalytic domain of F(1) is coupled via a rotary mechanism of the central stalk subunits to proton translocation. In terms of biological role, this protein is part of the stalk that links CF(0) to CF(1). It either transmits conformational changes from CF(0) to CF(1) or is implicated in proton conduction. In Magnetococcus marinus (strain ATCC BAA-1437 / JCM 17883 / MC-1), this protein is ATP synthase subunit delta.